A 530-amino-acid chain; its full sequence is Netrin-G2 (530 aa).

The N-terminal stretch at 1-17 (MLHLLALFLHCLPLASG) is a signal peptide. 3 disulfides stabilise this stretch: C22–C39, C61–C81, and C69–C77. The Laminin N-terminal domain occupies 35–286 (EFYACQPKVM…AISNIEVIGR (252 aa)). The interval 69 to 88 (CSHENPYLCSNECDASNPDL) is NGL discriminant loop I. N122 and N128 each carry an N-linked (GlcNAc...) asparagine glycan. An intrachain disulfide couples C171 to C195. The interval 201–203 (RWA) is NGL discriminant loop II. An NGL discriminant loop III region spans residues 264 to 267 (TYVQ). 15 disulfides stabilise this stretch: C287/C296, C289/C305, C307/C316, C319/C344, C353/C362, C355/C373, C376/C385, C388/C406, C409/C421, C411/C427, C429/C438, C441/C451, C456/C469, C463/C475, and C477/C486. Laminin EGF-like domains are found at residues 287-346 (CKCN…ACAT), 353-408 (CECY…VCIE), and 409-453 (CNCN…GCYP). A glycan (N-linked (GlcNAc...) asparagine) is linked at N310. N-linked (GlcNAc...) asparagine glycosylation occurs at N395. N422 carries an N-linked (GlcNAc...) asparagine glycan. The GPI-anchor amidated glycine moiety is linked to residue G507. A propeptide spans 508–530 (AAPRPATLLGCLLLLGLAARLGR) (removed in mature form).

In terms of assembly, interacts with LRRC4. In terms of processing, N-glycosylated.

It is found in the cell membrane. In terms of biological role, involved in controlling patterning and neuronal circuit formation at the laminar, cellular, subcellular and synaptic levels. Promotes neurite outgrowth of both axons and dendrites. In Homo sapiens (Human), this protein is Netrin-G2.